A 142-amino-acid polypeptide reads, in one-letter code: Large ribosomal subunit protein uL11 (142 aa).

This sequence belongs to the universal ribosomal protein uL11 family. As to quaternary structure, part of the ribosomal stalk of the 50S ribosomal subunit. Interacts with L10 and the large rRNA to form the base of the stalk. L10 forms an elongated spine to which L12 dimers bind in a sequential fashion forming a multimeric L10(L12)X complex. One or more lysine residues are methylated.

In terms of biological role, forms part of the ribosomal stalk which helps the ribosome interact with GTP-bound translation factors. The polypeptide is Large ribosomal subunit protein uL11 (Nitrobacter winogradskyi (strain ATCC 25391 / DSM 10237 / CIP 104748 / NCIMB 11846 / Nb-255)).